The sequence spans 627 residues: (-)-beta-pinene synthase 2, chloroplastic (627 aa).

A chloroplast-targeting transit peptide spans 1–51 (MDLISVLPSASKSCVCLHKPLSSSTHKLKPFCRKIRILGMPRPRKSVLMVS). Mg(2+) is bound by residues Asp378, Asp382, and Asp530. The short motif at 378–382 (DDMYD) is the DDXXD motif element.

This sequence belongs to the terpene synthase family. Tpsd subfamily. Requires Mg(2+) as cofactor. Mn(2+) is required as a cofactor.

Its subcellular location is the plastid. It is found in the chloroplast. The catalysed reaction is (2E)-geranyl diphosphate = (1S,5S)-beta-pinene + diphosphate. It carries out the reaction (2E)-geranyl diphosphate = (1S,5S)-alpha-pinene + diphosphate. The protein operates within terpene metabolism; oleoresin biosynthesis. It functions in the pathway secondary metabolite biosynthesis; terpenoid biosynthesis. Monoterpene synthase (TPS) involved in the biosynthesis of monoterpene natural products included in conifer oleoresin secretions and volatile emissions; these compounds contribute to biotic and abiotic stress defense against herbivores and pathogens. Catalyzes the conversion of (2E)-geranyl diphosphate (GPP) to (-)-beta-pinene and, to a lower extent, to (-)-alpha-pinene. The chain is (-)-beta-pinene synthase 2, chloroplastic from Pinus banksiana (Jack pine).